A 941-amino-acid polypeptide reads, in one-letter code: Glycine dehydrogenase (decarboxylating) (941 aa).

At K692 the chain carries N6-(pyridoxal phosphate)lysine.

It belongs to the GcvP family. In terms of assembly, the glycine cleavage system is composed of four proteins: P, T, L and H. Requires pyridoxal 5'-phosphate as cofactor.

It catalyses the reaction N(6)-[(R)-lipoyl]-L-lysyl-[glycine-cleavage complex H protein] + glycine + H(+) = N(6)-[(R)-S(8)-aminomethyldihydrolipoyl]-L-lysyl-[glycine-cleavage complex H protein] + CO2. The glycine cleavage system catalyzes the degradation of glycine. The P protein binds the alpha-amino group of glycine through its pyridoxal phosphate cofactor; CO(2) is released and the remaining methylamine moiety is then transferred to the lipoamide cofactor of the H protein. This chain is Glycine dehydrogenase (decarboxylating), found in Mycobacterium avium (strain 104).